We begin with the raw amino-acid sequence, 796 residues long: Quinoprotein glucose dehydrogenase (796 aa).

Residues 1–10 are Cytoplasmic-facing; sequence MAINNTGSRR. The chain crosses the membrane as a helical span at residues 11–37; the sequence is LLVTLTALFAALCGLYLLIGGGWLVAI. Topologically, residues 38-40 are periplasmic; it reads GGS. A helical transmembrane segment spans residues 41-58; the sequence is WYYPIAGLVMLGVAWMLW. The Cytoplasmic portion of the chain corresponds to 59 to 62; that stretch reads RSKR. A helical transmembrane segment spans residues 63–81; that stretch reads AALWLYAALLLGTMIWGVW. Over 82-95 the chain is Periplasmic; the sequence is EVGFDFWALTPRSD. Residues 96 to 110 form a helical membrane-spanning segment; the sequence is ILVFFGIWLILPFVW. Over 111-118 the chain is Cytoplasmic; the sequence is RRLVIPAS. A helical membrane pass occupies residues 119–141; the sequence is GAVAALVVALLISGGILTWAGFN. Residues 142–796 lie on the Periplasmic side of the membrane; it reads DPQEINGTLS…VAYALPDDVK (655 aa). Residue Asp-466 is the Proton acceptor of the active site.

This sequence belongs to the bacterial PQQ dehydrogenase family. Monomer. Requires pyrroloquinoline quinone as cofactor.

It is found in the cell inner membrane. The enzyme catalyses a ubiquinone + D-glucose = D-glucono-1,5-lactone + a ubiquinol. Its function is as follows. GDH is probably involved in energy conservation rather than in sugar metabolism. In Escherichia coli (strain K12), this protein is Quinoprotein glucose dehydrogenase (gcd).